A 551-amino-acid polypeptide reads, in one-letter code: Probable 4-coumarate--CoA ligase 1 (551 aa).

ATP is bound by residues Ser205, Ser206, Gly207, Thr208, Thr209, and Lys213. Tyr253 serves as a coordination point for (E)-4-coumaroyl-AMP. Lys274 serves as a coordination point for CoA. Residues Glu276–Gln346 are SBD1. (E)-4-coumaroyl-AMP-binding residues include Ala323, Gln346, Gly347, and Thr351. Residues Gln346, Gly347, Thr351, Asp430, and Arg445 each contribute to the ATP site. Residues Gly347–Tyr409 form an SBD2 region. (E)-4-coumaroyl-AMP is bound by residues Lys447 and Lys451. CoA contacts are provided by Lys453 and Gly454. An ATP-binding site is contributed by Lys537.

It belongs to the ATP-dependent AMP-binding enzyme family. Mg(2+) is required as a cofactor.

The catalysed reaction is (E)-4-coumarate + ATP + CoA = (E)-4-coumaroyl-CoA + AMP + diphosphate. The enzyme catalyses (E)-4-coumarate + ATP + H(+) = (E)-4-coumaroyl-AMP + diphosphate. It carries out the reaction (E)-4-coumaroyl-AMP + CoA = (E)-4-coumaroyl-CoA + AMP + H(+). It participates in phytoalexin biosynthesis; 3,4',5-trihydroxystilbene biosynthesis; 3,4',5-trihydroxystilbene from trans-4-coumarate: step 1/2. Functionally, carboxylate--CoA ligase that may use 4-coumarate as substrate. Follows a two-step reaction mechanism, wherein the carboxylate substrate first undergoes adenylation by ATP, followed by a thioesterification in the presence of CoA to yield the final CoA thioester. The protein is Probable 4-coumarate--CoA ligase 1 (4cl1) of Dictyostelium discoideum (Social amoeba).